Consider the following 522-residue polypeptide: F-box-like/WD repeat-containing protein TBL1Y (522 aa).

Residue Ser2 is modified to N-acetylserine. Positions 4–36 constitute a LisH domain; that stretch reads TSDEVNFLVYRYLQESGFSHSAFTFGIESHISQ. An F-box-like domain is found at 41–86; sequence GTLVPPSALISILQKGLQYVEAEISINKDGTVFDSRPIESLSLIVA. At Lys102 the chain carries N6-acetyllysine. Phosphoserine is present on Ser130. WD repeat units follow at residues 177–216, 233–272, 274–313, 316–354, 357–396, 399–447, 450–489, and 491–521; these read GHESEVFICAWNPVSDLLASGSGDSTARIWNLNENSNGGS, PSNKDVTSLDWNSDGTLLAMGSYDGFARIWTENGNLASTL, QHKGPIFALKWNKKGNYVLSAGVDKTTIIWDAHTGEAKQQ, FHSAPALDVDWQNNMTFASCSTDMCIHVCRLGCDHPVKT, GHTNEVNAIKWDPSGMLLASCSDDMTLKIWSMKQDACVHD, AHSK…CTHT, KHQEPVYSVAFSPDGKYLASGSFDKYVHIWNTQSGSLVHS, and QGTGGIFEVCWNARGDKVGASASDGSVCVLD. Residue Lys287 forms a Glycyl lysine isopeptide (Lys-Gly) (interchain with G-Cter in SUMO2) linkage.

Belongs to the WD repeat EBI family. As to quaternary structure, probable component of the N-Cor repressor complex and some E3 ubiquitin ligase complex. Interacts with NCOR2. In terms of tissue distribution, fetal brain and prostate. Expressed in the cochlear spiral ganglion neurons, and in outer and inner hair cells.

The protein localises to the nucleus. F-box-like protein involved in the recruitment of the ubiquitin/19S proteasome complex to nuclear receptor-regulated transcription units. Plays an essential role in transcription activation mediated by nuclear receptors. Probably acts as integral component of corepressor complexes that mediates the recruitment of the 19S proteasome complex, leading to the subsequent proteasomal degradation of transcription repressor complexes, thereby allowing cofactor exchange. In Homo sapiens (Human), this protein is F-box-like/WD repeat-containing protein TBL1Y (TBL1Y).